A 262-amino-acid polypeptide reads, in one-letter code: Virulence regulon transcriptional activator VirF (262 aa).

An HTH araC/xylS-type domain is found at 161-258; the sequence is DQIRKIVEKN…GITPKKFYLY (98 aa). 2 consecutive DNA-binding regions (H-T-H motif) follow at residues 178–199 and 225–248; these read SDIS…ESEK and INDV…NEYY.

In terms of assembly, homodimer.

Functionally, primary regulator of plasmid-encoded virulence genes. Activates the transcription of icsA (virG) and of virB, which is an activator of the ipaABCD virulence regulon. The chain is Virulence regulon transcriptional activator VirF (virF) from Shigella dysenteriae.